The sequence spans 563 residues: Endogenous retroviral envelope protein HEMO (563 aa).

Residues 1–26 (MGSLSNYALLQLTLTAFLTILVQPQH) form the signal peptide. Over 27–488 (LLAPVFRTLS…IFAKVGDWFR (462 aa)) the chain is Extracellular. Residues Asn122 and Asn192 are each glycosylated (N-linked (GlcNAc...) asparagine). The helical transmembrane segment at 489–509 (SWGYVLLIVLFCLFIFVLIYV) threads the bilayer. Over 510-563 (RVFRKSRRSLNSQPLNLALSPQQSAQLLVSETSCQVSNRAMKGLTTHQYDTSLL) the chain is Cytoplasmic.

It belongs to the gamma type-C retroviral envelope protein family. In terms of processing, N-glycosylated. Cleaved by some metalloproteinase at 432-Gln-Arg-433 (mainly) or 433-Arg-Gln-434, leading to release the secreted form (Endogenous retroviral envelope protein HEMO, secreted form) in the extracellular medium. Expressed at high level in the placenta and stem cells (at protein level). Also expressed in the kidney but at a lower level. Endogenous retroviral envelope protein HEMO, secreted form: Present in the blood of pregnant women (at protein level).

It localises to the cell membrane. It is found in the secreted. Endogenous envelope proteins originate from retroviral envelope proteins, which mediate receptor recognition and membrane fusion during early infection. Endogenous envelope proteins may have kept, lost or modified their original function during evolution. The protein is Endogenous retroviral envelope protein HEMO of Homo sapiens (Human).